The sequence spans 148 residues: uncharacterized protein (148 aa).

An N-terminal signal peptide occupies residues 1 to 20 (MNLTKLLPAFAAAVVLSACA).

This is an uncharacterized protein from Haemophilus influenzae (strain ATCC 51907 / DSM 11121 / KW20 / Rd).